The primary structure comprises 104 residues: MIRKAFVMQVNPDAHEEYQRRHNPIWPELEAVLKSHGAHNYAIYLDKARNLLFATIEIESEERWNAVASTDVCQRWWKYMIDVMPANADNSPVSSELQEVFYLP.

A substrate-binding site is contributed by Tyr18. The active-site Proton donor is His22. Substrate-binding positions include Tyr41 and 76-77 (WW).

This sequence belongs to the rhamnose mutarotase family. In terms of assembly, homodimer.

It localises to the cytoplasm. The catalysed reaction is alpha-L-rhamnose = beta-L-rhamnose. Its pathway is carbohydrate metabolism; L-rhamnose metabolism. Functionally, involved in the anomeric conversion of L-rhamnose. The polypeptide is L-rhamnose mutarotase (Escherichia coli O127:H6 (strain E2348/69 / EPEC)).